We begin with the raw amino-acid sequence, 509 residues long: MADAEAAMTFPKKHKKKKERKPLPEADVAEIQHAEDFLIKPESKAAQLDTSQWPLLLKNFDRLNVRTTHYTPIPCGSNPLKREIGEYVRTGFINLDKPSNPSSHEVVAWIRRILRVEKTGHSGTLDPKVTGCLIVCIERATRLVKSQQSAGKEYVGVVRLHNAIEGTAQLSRALETLTGALFQRPPLIAAVKRQLRVRTIYESRVVEYDPERRLGVFWVSCEAGTYIRTLCVHLGLLLGVGGQMQELRRVRSGVVGERDHMVTMHDVLDAQYLYDHHRDESYLRRVVFPLEKLLTSHKRLVMKDSAVNAICYGAKIMLPGLLRYEDGIEVNQEVVVITTKGEAVCVAIALMTTAVISTCDHGVVAKIKRVIMERDTYPRKWGLGPKASQKKQLIKQGLLDKHGRPTDGTPASWTRDYVDYSDSSKKATAAEATPGPGVTADAASIVKRKRDSDSDADEATPTTTPRVKKEKKKKKEKADGGEEAAEDGDGDATRKKKKKKARAAEELSG.

The segment at 1 to 25 is disordered; sequence MADAEAAMTFPKKHKKKKERKPLPE. The residue at position 2 (alanine 2) is an N-acetylalanine. A nucleolar localization region spans residues 2 to 22; sequence ADAEAAMTFPKKHKKKKERKP. Residues 11-20 show a composition bias toward basic residues; sequence PKKHKKKKER. Glycyl lysine isopeptide (Lys-Gly) (interchain with G-Cter in SUMO2) cross-links involve residues lysine 21, lysine 40, and lysine 44. The Nucleophile role is filled by aspartate 126. Residue lysine 192 forms a Glycyl lysine isopeptide (Lys-Gly) (interchain with G-Cter in SUMO2) linkage. The PUA domain occupies 297–372; sequence HKRLVMKDSA…VVAKIKRVIM (76 aa). The interval 381–509 is disordered; sequence WGLGPKASQK…KARAAEELSG (129 aa). Serine 388 is subject to Phosphoserine. Glycyl lysine isopeptide (Lys-Gly) (interchain with G-Cter in SUMO2) cross-links involve residues lysine 395 and lysine 425. Over residues 416–425 the composition is skewed to basic and acidic residues; the sequence is DYVDYSDSSK. Residues 447–509 are nuclear and nucleolar localization; the sequence is KRKRDSDSDA…KARAAEELSG (63 aa). Phosphoserine occurs at positions 452 and 454. Threonine 460 is modified (phosphothreonine). Positions 466 to 475 are enriched in basic residues; it reads RVKKEKKKKK. The span at 481-490 shows a compositional bias: acidic residues; that stretch reads GEEAAEDGDG. Residue serine 508 is modified to Phosphoserine.

Belongs to the pseudouridine synthase TruB family. Part of the H/ACA small nucleolar ribonucleoprotein (H/ACA snoRNP) complex, which contains NHP2/NOLA2, GAR1/NOLA1, NOP10/NOLA3, and DKC1/NOLA4, which is presumed to be the catalytic subunit. The complex contains a stable core formed by binding of one or two NOP10-DKC1 heterodimers to NHP2; GAR1 subsequently binds to this core via DKC1. The complex binds a box H/ACA small nucleolar RNA (snoRNA), which may target the specific site of modification within the RNA substrate. During assembly, the complex contains NAF1 instead of GAR1/NOLA1. The complex also interacts with TERC, which contains a 3'-terminal domain related to the box H/ACA snoRNAs. Specific interactions with snoRNAs or TERC are mediated by GAR1 and NHP2. Associates with NOLC1/NOPP140. H/ACA snoRNPs interact with the SMN complex, consisting of SMN1 or SMN2, GEMIN2/SIP1, DDX20/GEMIN3, and GEMIN4. This is mediated by interaction between GAR1 and SMN1 or SMN2. The SMN complex may be required for correct assembly of the H/ACA snoRNP complex. Component of the telomerase holoenzyme complex composed of one molecule of TERT, one molecule of WRAP53/TCAB1, two molecules of H/ACA ribonucleoprotein complex subunits DKC1, NOP10, NHP2 and GAR1, and a telomerase RNA template component (TERC). The telomerase holoenzyme complex is associated with TEP1, SMG6/EST1A and POT1. Interacts with SHQ1; this interaction may lead to the stabilization of DKC1, from the time of its synthesis until its association with NOP10, NHP2, and NAF1 at the nascent H/ACA RNA. Interacts with HMBOX1. Interacts with DHX36.

It localises to the nucleus. It is found in the nucleolus. The protein localises to the cajal body. The enzyme catalyses uridine in 5S rRNA = pseudouridine in 5S rRNA. Its function is as follows. Catalytic subunit of H/ACA small nucleolar ribonucleoprotein (H/ACA snoRNP) complex, which catalyzes pseudouridylation of rRNA. This involves the isomerization of uridine such that the ribose is subsequently attached to C5, instead of the normal N1. Each rRNA can contain up to 100 pseudouridine ('psi') residues, which may serve to stabilize the conformation of rRNAs. Required for ribosome biogenesis and telomere maintenance. Also required for correct processing or intranuclear trafficking of TERC, the RNA component of the telomerase reverse transcriptase (TERT) holoenzyme. The protein is H/ACA ribonucleoprotein complex subunit DKC1 (Dkc1) of Rattus norvegicus (Rat).